Here is a 123-residue protein sequence, read N- to C-terminus: Small ribosomal subunit protein uS12 (123 aa).

Asp89 is modified (3-methylthioaspartic acid).

Belongs to the universal ribosomal protein uS12 family. Part of the 30S ribosomal subunit. Contacts proteins S8 and S17. May interact with IF1 in the 30S initiation complex.

Functionally, with S4 and S5 plays an important role in translational accuracy. Its function is as follows. Interacts with and stabilizes bases of the 16S rRNA that are involved in tRNA selection in the A site and with the mRNA backbone. Located at the interface of the 30S and 50S subunits, it traverses the body of the 30S subunit contacting proteins on the other side and probably holding the rRNA structure together. The combined cluster of proteins S8, S12 and S17 appears to hold together the shoulder and platform of the 30S subunit. The protein is Small ribosomal subunit protein uS12 of Methylobacterium sp. (strain 4-46).